The chain runs to 260 residues: OCIA domain-containing protein 1 (260 aa).

The OCIA domain occupies 1-110 (MDSPLSDGSR…MRLPNSRLGE (110 aa)). The tract at residues 146-260 (DVYTDEGLNP…KNKYGDSWQD (115 aa)) is disordered. The segment covering 155–164 (PSRSTALNLD) has biased composition (polar residues). Positions 205 to 215 (EDLRKKNREGY) are enriched in basic and acidic residues.

Belongs to the OCIAD1 family.

This is OCIA domain-containing protein 1 from Drosophila pseudoobscura pseudoobscura (Fruit fly).